A 130-amino-acid polypeptide reads, in one-letter code: Serum amyloid A protein (130 aa).

The N-terminal stretch at 1–18 is a signal peptide; sequence MKLFTGLILCSLVLGVHS. A Pyrrolidone carboxylic acid modification is found at Gln-19. A disordered region spans residues 86-130; sequence TDPLFKGTTSGQGQEDSRADQAANEWGRSGKDPNHFRPAGLPDKY.

The protein belongs to the SAA family. Post-translationally, this protein is the precursor of amyloid protein A, which is formed by the removal of residues from the C-terminal end. Expressed by the liver; secreted in plasma.

The protein resides in the secreted. Its function is as follows. Major acute phase reactant. Apolipoprotein of the HDL complex. This Bos taurus (Bovine) protein is Serum amyloid A protein (SAA1).